Here is a 657-residue protein sequence, read N- to C-terminus: Probable potassium transport system protein Kup 1 (657 aa).

The next 12 helical transmembrane spans lie at 40 to 60 (VTSG…GDIG), 88 to 108 (VLSL…VLLL), 135 to 155 (WFLL…SMIT), 172 to 192 (PALE…LFAV), 198 to 218 (ALVA…IAVM), 241 to 261 (FLLS…LAVT), 282 to 302 (WMFF…ALVL), 320 to 340 (LVLP…QAVI), 380 to 400 (LLLI…NLAS), 402 to 422 (YGIA…VVIW), 432 to 452 (AAAV…ANLL), and 454 to 474 (LLEG…TIWT).

This sequence belongs to the HAK/KUP transporter (TC 2.A.72) family.

It is found in the cell inner membrane. It carries out the reaction K(+)(in) + H(+)(in) = K(+)(out) + H(+)(out). Its function is as follows. Transport of potassium into the cell. Likely operates as a K(+):H(+) symporter. The sequence is that of Probable potassium transport system protein Kup 1 from Bradyrhizobium diazoefficiens (strain JCM 10833 / BCRC 13528 / IAM 13628 / NBRC 14792 / USDA 110).